Here is a 342-residue protein sequence, read N- to C-terminus: Large ribosomal subunit protein uL10 (342 aa).

Residues 212 to 342 (EYIDMLQKAY…ALAGLSALFG (131 aa)) form a required for interaction with ribosomal protein L12 dimers region. Residues 299-308 (QAQVAVATQP) show a composition bias toward polar residues. Residues 299–342 (QAQVAVATQPSEEEKKEEEKTEEEEKEEEASEEEALAGLSALFG) form a disordered region. The segment covering 318 to 333 (KTEEEEKEEEASEEEA) has biased composition (acidic residues).

Belongs to the universal ribosomal protein uL10 family. Part of the 50S ribosomal subunit, binds large rRNA. Forms the ribosomal stalk which helps the ribosome interact with GTP-bound translation factors. Forms a heptameric L10(L12)2(L12)2(L12)2 complex, where L10 forms an elongated spine to which the L12 dimers bind in a sequential fashion.

Functionally, forms the large subunit's ribosomal stalk, playing a central role in the interaction of the ribosome with elongation factors; the stalk complex of P.horikoshii binds to E.coli large subunits and confers on them the ability to interact with eukaryotic elongation factors. Each succesive L12 dimer bound along the P0 spine increases the GTPase activity of elongation factors and increases translation by reconsituted ribosomes, although the first site is the most stimulatory. This is Large ribosomal subunit protein uL10 from Pyrococcus horikoshii (strain ATCC 700860 / DSM 12428 / JCM 9974 / NBRC 100139 / OT-3).